The chain runs to 194 residues: Probable GTP-binding protein EngB (194 aa).

The region spanning 22-194 (GKPEIALVGR…EVWHWIEQHI (173 aa)) is the EngB-type G domain. Residues 30–37 (GRSNVGKS), 57–61 (GKTQT), 75–78 (DVPG), 142–145 (TKSD), and 175–177 (FSS) contribute to the GTP site. 2 residues coordinate Mg(2+): S37 and T59.

The protein belongs to the TRAFAC class TrmE-Era-EngA-EngB-Septin-like GTPase superfamily. EngB GTPase family. Mg(2+) serves as cofactor.

In terms of biological role, necessary for normal cell division and for the maintenance of normal septation. The sequence is that of Probable GTP-binding protein EngB from Leuconostoc mesenteroides subsp. mesenteroides (strain ATCC 8293 / DSM 20343 / BCRC 11652 / CCM 1803 / JCM 6124 / NCDO 523 / NBRC 100496 / NCIMB 8023 / NCTC 12954 / NRRL B-1118 / 37Y).